A 67-amino-acid polypeptide reads, in one-letter code: Large ribosomal subunit protein bL35 (67 aa).

It belongs to the bacterial ribosomal protein bL35 family.

This is Large ribosomal subunit protein bL35 from Zymomonas mobilis subsp. mobilis (strain ATCC 31821 / ZM4 / CP4).